The following is an 85-amino-acid chain: Cytochrome c6 (85 aa).

Cysteine 14, cysteine 17, histidine 18, and methionine 58 together coordinate heme c.

This sequence belongs to the cytochrome c family. PetJ subfamily. Monomer. In terms of processing, binds 1 heme c group covalently per subunit.

The protein resides in the plastid. Its subcellular location is the chloroplast thylakoid lumen. Functions as an electron carrier between membrane-bound cytochrome b6-f and photosystem I in oxygenic photosynthesis. This chain is Cytochrome c6 (petJ), found in Petalonia fascia (False kelp).